The primary structure comprises 572 residues: MKQSKMLIPTLREVPNDAEVLSHQILLRAGYIRQVAAGIYSYLPLANRVLEKLKTIMREEFEKIDAVEMLMPALLPAELWKESGRYETYGPNLYRLKDRNDRDYILGPTHEETFTELIRDEINSYKRLPLNLYQIQTKYRDEKRSRSGLLRGREFIMKDGYSFHADEASLDQSYRDYEKAYSRIFERCGLEFRAIIGDGGAMGGKDSKEFMAISEIGEDTICYSTESDYAANLEMATSLYTPKKSHETQLDLEKIATPEVGTIAEVANFFEVEPQRIIKSVLFIADEEPVMVLVRGDHDVNDVKLKNFLGADFLDEATEEDARRVLGAGFGSIGPVNVSEDVKIYADLAVQDLANAIVGANEDGYHLTNVNPDRDFQPISYEDLRFVQEGDPSPDGNGVLAFTKGIEIGHIFKLGTRYSDAMGATVLDENGREKSVIMGCYGIGVSRLLSAIVEQNADERGINWPTGIAPFDLHVVQMNVKDEYQTKLSQEVEAMMTEAGYEVLVDDRNERAGVKFADADLIGCPIRITVGKKAVDGVVEVKIKRTGEMLEVRKEELESTLSILMNTTSEVE.

The protein belongs to the class-II aminoacyl-tRNA synthetase family. ProS type 1 subfamily. In terms of assembly, homodimer.

Its subcellular location is the cytoplasm. It carries out the reaction tRNA(Pro) + L-proline + ATP = L-prolyl-tRNA(Pro) + AMP + diphosphate. In terms of biological role, catalyzes the attachment of proline to tRNA(Pro) in a two-step reaction: proline is first activated by ATP to form Pro-AMP and then transferred to the acceptor end of tRNA(Pro). As ProRS can inadvertently accommodate and process non-cognate amino acids such as alanine and cysteine, to avoid such errors it has two additional distinct editing activities against alanine. One activity is designated as 'pretransfer' editing and involves the tRNA(Pro)-independent hydrolysis of activated Ala-AMP. The other activity is designated 'posttransfer' editing and involves deacylation of mischarged Ala-tRNA(Pro). The misacylated Cys-tRNA(Pro) is not edited by ProRS. This chain is Proline--tRNA ligase, found in Enterococcus faecalis (strain ATCC 700802 / V583).